Reading from the N-terminus, the 279-residue chain is Tryptophan synthase alpha chain (279 aa).

Residues Glu50 and Asp61 each act as proton acceptor in the active site.

Belongs to the TrpA family. Tetramer of two alpha and two beta chains.

The enzyme catalyses (1S,2R)-1-C-(indol-3-yl)glycerol 3-phosphate + L-serine = D-glyceraldehyde 3-phosphate + L-tryptophan + H2O. Its pathway is amino-acid biosynthesis; L-tryptophan biosynthesis; L-tryptophan from chorismate: step 5/5. The alpha subunit is responsible for the aldol cleavage of indoleglycerol phosphate to indole and glyceraldehyde 3-phosphate. The chain is Tryptophan synthase alpha chain from Mesorhizobium japonicum (strain LMG 29417 / CECT 9101 / MAFF 303099) (Mesorhizobium loti (strain MAFF 303099)).